Consider the following 1387-residue polypeptide: Regulator of G-protein signaling 12 (1387 aa).

The region spanning 21–97 is the PDZ domain; it reads SVEVARGRAG…GVLRMVISEG (77 aa). Phosphoserine occurs at positions 171 and 194. Lys-195 is covalently cross-linked (Glycyl lysine isopeptide (Lys-Gly) (interchain with G-Cter in SUMO2)). One can recognise a PID domain in the interval 227 to 339; it reads VAMVVGYLGS…GALRTSCHVF (113 aa). Disordered regions lie at residues 409–428 and 442–488; these read ADAHQNNSTSSNSDSGIGNF and LGGG…PLET. The segment covering 412–428 has biased composition (polar residues); the sequence is HQNNSTSSNSDSGIGNF. 2 positions are modified to omega-N-methylarginine: Arg-524 and Arg-633. Residues 620–650 form a disordered region; sequence RKTKEDKKSSKLGRGVALAQTSQRTSARRSF. Phosphoserine is present on residues Ser-661 and Ser-671. The region spanning 715-832 is the RGS domain; that stretch reads SFERLLQDPV…LKSQLYQECV (118 aa). The disordered stretch occupies residues 842-934; that stretch reads PDSQQVPSSP…ANGGLCRRES (93 aa). A compositionally biased stretch (low complexity) spans 849–869; it reads SSPASKHSISSDHSNVSTPKK. Phosphoserine is present on residues Ser-850 and Ser-879. Residues 914–923 show a composition bias toward basic and acidic residues; that stretch reads DHGDHAHDAL. Ser-943 is modified (phosphoserine). RBD domains follow at residues 962-1032 and 1034-1104; these read KHCC…LGKR and LFRL…LEER. A compositionally biased stretch (basic and acidic residues) spans 1103 to 1117; it reads ERDPSRGKVSTEKQK. The segment at 1103 to 1168 is disordered; that stretch reads ERDPSRGKVS…ARDPRLSKRE (66 aa). Positions 1122–1133 are enriched in polar residues; the sequence is KQSSAVNSSPRN. Positions 1151-1168 are enriched in basic and acidic residues; that stretch reads IRGENGKSARDPRLSKRE. Positions 1187 to 1209 constitute a GoLoco domain; sequence AEEFFELISKAQSNRADDQRGLL. 2 disordered regions span residues 1224-1325 and 1349-1387; these read PGSS…EGTT and ADLTLMGEGDISSPNSTLLPPPPLPQDTPGPTRPGTSRF. The segment covering 1261 to 1280 has biased composition (low complexity); it reads SDSPATSPASAQSPCSAYSP. A compositionally biased stretch (polar residues) spans 1315–1325; it reads SCISTVQEGTT. Residues 1367–1380 are compositionally biased toward pro residues; the sequence is LPPPPLPQDTPGPT.

Interacts with GNAI1, GNAI2 and GNAI3; the interactions are GDP-dependent. In terms of tissue distribution, detected in brain cortex GABAergic neurons, in striatum and substantia nigra, and in the Purkinje cell layer in the cerebellum and hippocampus (at protein level). Expressed at high levels in brain and lung and lower levels in testis, heart, and spleen.

It is found in the nucleus. It localises to the cytoplasm. The protein resides in the cell projection. The protein localises to the dendrite. Its subcellular location is the synapse. Functionally, regulates G protein-coupled receptor signaling cascades. Inhibits signal transduction by increasing the GTPase activity of G protein alpha subunits, thereby driving them into their inactive GDP-bound form. The polypeptide is Regulator of G-protein signaling 12 (Rgs12) (Rattus norvegicus (Rat)).